A 527-amino-acid chain; its full sequence is Arginine--tRNA ligase (527 aa).

The 'HIGH' region signature appears at 108 to 118 (ANPTGPLHIGH).

The protein belongs to the class-I aminoacyl-tRNA synthetase family. Monomer.

The protein resides in the cytoplasm. It catalyses the reaction tRNA(Arg) + L-arginine + ATP = L-arginyl-tRNA(Arg) + AMP + diphosphate. The chain is Arginine--tRNA ligase from Sulfurimonas denitrificans (strain ATCC 33889 / DSM 1251) (Thiomicrospira denitrificans (strain ATCC 33889 / DSM 1251)).